Consider the following 211-residue polypeptide: Ribosomal RNA small subunit methyltransferase G (211 aa).

S-adenosyl-L-methionine contacts are provided by residues Gly74, Leu79, 125-126, and Arg140; that span reads AE.

The protein belongs to the methyltransferase superfamily. RNA methyltransferase RsmG family.

Its subcellular location is the cytoplasm. Specifically methylates the N7 position of guanine in position 518 of 16S rRNA. This chain is Ribosomal RNA small subunit methyltransferase G, found in Clavibacter michiganensis subsp. michiganensis (strain NCPPB 382).